Here is a 381-residue protein sequence, read N- to C-terminus: Homoserine O-succinyltransferase (381 aa).

In terms of domain architecture, AB hydrolase-1 spans 45 to 360 (NAVLVCHALN…PHGHDAFLLD (316 aa)). Residue Ser-151 is the Nucleophile of the active site. Position 221 (Arg-221) interacts with substrate. Residues Asp-321 and His-354 contribute to the active site. Asp-355 lines the substrate pocket.

The protein belongs to the AB hydrolase superfamily. MetX family. As to quaternary structure, homodimer.

It is found in the cytoplasm. It catalyses the reaction L-homoserine + succinyl-CoA = O-succinyl-L-homoserine + CoA. The protein operates within amino-acid biosynthesis; L-methionine biosynthesis via de novo pathway; O-succinyl-L-homoserine from L-homoserine: step 1/1. Its function is as follows. Transfers a succinyl group from succinyl-CoA to L-homoserine, forming succinyl-L-homoserine. The sequence is that of Homoserine O-succinyltransferase from Burkholderia ambifaria (strain ATCC BAA-244 / DSM 16087 / CCUG 44356 / LMG 19182 / AMMD) (Burkholderia cepacia (strain AMMD)).